A 154-amino-acid chain; its full sequence is Myoglobin (154 aa).

The 147-residue stretch at glycine 2–lysine 148 folds into the Globin domain. Residue serine 4 is modified to Phosphoserine. Histidine 65 lines the nitrite pocket. Residue histidine 65 participates in O2 binding. At threonine 68 the chain carries Phosphothreonine. Histidine 94 contacts heme b.

This sequence belongs to the globin family. Monomeric.

The protein localises to the cytoplasm. It localises to the sarcoplasm. The enzyme catalyses Fe(III)-heme b-[protein] + nitric oxide + H2O = Fe(II)-heme b-[protein] + nitrite + 2 H(+). It catalyses the reaction H2O2 + AH2 = A + 2 H2O. Monomeric heme protein which primary function is to store oxygen and facilitate its diffusion within muscle tissues. Reversibly binds oxygen through a pentacoordinated heme iron and enables its timely and efficient release as needed during periods of heightened demand. Depending on the oxidative conditions of tissues and cells, and in addition to its ability to bind oxygen, it also has a nitrite reductase activity whereby it regulates the production of bioactive nitric oxide. Under stress conditions, like hypoxia and anoxia, it also protects cells against reactive oxygen species thanks to its pseudoperoxidase activity. In Vulpes chama (Cape fox), this protein is Myoglobin (MB).